The sequence spans 140 residues: Alkaline proteinase inhibitor (140 aa).

The signal sequence occupies residues 1–25; it reads MPSSVQATAGLLATLMMFCGEVAMA.

The protein belongs to the protease inhibitor I38 family.

It localises to the periplasm. Inhibitor of the alkaline protease. The polypeptide is Alkaline proteinase inhibitor (inh) (Pseudomonas brassicacearum (strain NFM421)).